Here is a 316-residue protein sequence, read N- to C-terminus: Putative S-adenosyl-L-methionine-dependent methyltransferase MAB_4606c (316 aa).

Residues Asp137 and 166-167 (DL) contribute to the S-adenosyl-L-methionine site.

It belongs to the UPF0677 family.

In terms of biological role, exhibits S-adenosyl-L-methionine-dependent methyltransferase activity. This Mycobacteroides abscessus (strain ATCC 19977 / DSM 44196 / CCUG 20993 / CIP 104536 / JCM 13569 / NCTC 13031 / TMC 1543 / L948) (Mycobacterium abscessus) protein is Putative S-adenosyl-L-methionine-dependent methyltransferase MAB_4606c.